A 147-amino-acid polypeptide reads, in one-letter code: MLSPKRTRFRKQHRGRMKGISSGGNHICFGKYALQALEPAWITSRQIEAGRRAMTRNARRGGKIWVRIFPDKPVTVRPAETRMGSGKGSPEYWVAVVKPGRILYEMGGVTKKIARRAISIAASKMPIRTQFISSEIEEKSKTTRKES.

Residues 1-17 show a composition bias toward basic residues; the sequence is MLSPKRTRFRKQHRGRM. Residues 1-20 form a disordered region; the sequence is MLSPKRTRFRKQHRGRMKGI.

This sequence belongs to the universal ribosomal protein uL16 family. In terms of assembly, part of the 50S ribosomal subunit.

The protein localises to the plastid. Its subcellular location is the chloroplast. The sequence is that of Large ribosomal subunit protein uL16c from Ipomoea purpurea (Common morning glory).